We begin with the raw amino-acid sequence, 158 residues long: MIKRGFPAVLDENTEILILGSLPSDESIRKQQYYGNPGNDFWRLVGHAIGENLQDMAYEKKLKTLKHNRIGLWDVFKAGSREGSQDSKIGDEEINDFSGLKEMVPKLRLICFNGRKAGEYEPLLRGMGYETKVLPSSSGANRRFSKNRESEWEAVFRH.

N39 is an active-site residue.

The protein belongs to the uracil-DNA glycosylase (UDG) superfamily. Type 6 (HDG) family.

Its function is as follows. Excises hypoxanthine, a deamination product of adenine, from double-stranded DNA. Acts on double-stranded DNA containing G/I, T/I, A/I and C/I base pairs, but not on single-stranded inosine-containing DNA. Also has minor xanthine DNA glycosylase activity. Lacks any detectable uracil-DNA glycosylase activity. The sequence is that of Hypoxanthine DNA glycosylase from Methanosarcina acetivorans (strain ATCC 35395 / DSM 2834 / JCM 12185 / C2A).